Consider the following 344-residue polypeptide: DNA integrity scanning protein DisA (344 aa).

A DAC domain is found at 1-133 (MALLAPGTPI…GRRYLIERPE (133 aa)). Residues G61 and 92-96 (TRHRT) each bind ATP.

This sequence belongs to the DisA family. In terms of assembly, homooctamer. Requires Mg(2+) as cofactor.

The enzyme catalyses 2 ATP = 3',3'-c-di-AMP + 2 diphosphate. Its function is as follows. Participates in a DNA-damage check-point. DisA forms globular foci that rapidly scan along the chromosomes searching for lesions. Also has diadenylate cyclase activity, catalyzing the condensation of 2 ATP molecules into cyclic di-AMP (c-di-AMP). c-di-AMP likely acts as a signaling molecule that may couple DNA integrity with a cellular process. The chain is DNA integrity scanning protein DisA from Cutibacterium acnes (strain DSM 16379 / KPA171202) (Propionibacterium acnes).